The primary structure comprises 484 residues: MAPWLQLLSLLGLLPGAVAAPAQPRAASFQAWGPPSPELLAPTRFALEMFNRGRAAGTRAVLGLVRGRVRRAGQGSLYSLEATLEEPPCNDPMVCRLPVSKKTLLCSFQVLDELGRHVLLRKDCGPVDTKVPGAGEPKSAFTQGSAMISSLSQNHPDNRNETFSSVISLLNEDPLSQDLPVKMASIFKNFVITYNRTYESKEEARWRLSVFVNNMVRAQKIQALDRGTAQYGVTKFSDLTEEEFRTIYLNTLLRKEPGNKMKQAKSVGDLAPPEWDWRSKGAVTKVKDQGMCGSCWAFSVTGNVEGQWFLNQGTLLSLSEQELLDCDKMDKACMGGLPSNAYSAIKNLGGLETEDDYSYQGHMQSCNFSAEKAKVYINDSVELSQNEQKLAAWLAKRGPISVAINAFGMQFYRHGISRPLRPLCSPWLIDHAVLLVGYGNRSDVPFWAIKNSWGTDWGEKGYYYLHRGSGACGVNTMASSAVVD.

Residues 1–19 (MAPWLQLLSLLGLLPGAVA) form the signal peptide. Residues 20 to 270 (APAQPRAASF…MKQAKSVGDL (251 aa)) constitute a propeptide, activation peptide. 2 N-linked (GlcNAc...) asparagine glycosylation sites follow: Asn160 and Asn195. Cystine bridges form between Cys292-Cys333 and Cys326-Cys366. Cys295 is a catalytic residue. N-linked (GlcNAc...) asparagine glycosylation is found at Asn367 and Asn378. A disulfide bond links Cys424 and Cys472. His431 is an active-site residue. Residue Asn440 is glycosylated (N-linked (GlcNAc...) asparagine). Asn451 is an active-site residue.

It belongs to the peptidase C1 family. High expression levels in heart, skeletal muscle, brain, testis and ovary; moderate levels in prostate, placenta, liver and colon; and no detectable expression in peripheral leukocytes and thymus.

The protein localises to the lysosome. It catalyses the reaction The recombinant enzyme cleaves synthetic substrates with Phe and Leu (better than Val) in P2, with high specificity constant (kcat/Km) comparable to that of cathepsin L.. Functionally, thiol protease which is believed to participate in intracellular degradation and turnover of proteins. Has also been implicated in tumor invasion and metastasis. This chain is Cathepsin F (CTSF), found in Homo sapiens (Human).